The chain runs to 396 residues: Serine/threonine-protein kinase VRK1 (396 aa).

Residues 37–317 form the Protein kinase domain; sequence WKVGLPIGQG…LLDYTEKPLY (281 aa). ATP contacts are provided by residues 43–51 and K71; that span reads IGQGGFGCI. A Glycyl lysine isopeptide (Lys-Gly) (interchain with G-Cter in SUMO2) cross-link involves residue K71. The Proton acceptor role is filled by D177. At S342 the chain carries Phosphoserine; by PLK3. The interval 354 to 396 is disordered; the sequence is ITKKRKKEIEESKEPGVEDTEWSNTQTEEAIQTRSRTRKRVQK. Residue T355 is modified to Phosphothreonine; by autocatalysis. Residues 360–369 show a composition bias toward basic and acidic residues; that stretch reads KEIEESKEPG. The segment covering 375-387 has biased composition (polar residues); sequence WSNTQTEEAIQTR. Position 376 is a phosphoserine (S376). Residue T378 is modified to Phosphothreonine. The segment at 387–393 is required for interaction with the nucleosome; that stretch reads RSRTRKR.

The protein belongs to the protein kinase superfamily. CK1 Ser/Thr protein kinase family. VRK subfamily. As to quaternary structure, interacts with HDAC1, KAT2B, SETDB1, KDM3A and KDM4A. Associates with the nucleosome through interactions with nucleosome DNA, histone H2A and histone H2B; the interaction with H2A and H2B is mediated by the nucleosome acidic patch, a cluster of negatively charged residues of H2A and H2B forming a cleft within the nucleosome core. In terms of assembly, (Microbial infection) Interacts with vaccinia protein B12; this interaction inhibits the repressive activity of the vaccinia virus B12 pseudokinase on viral replication factory formation. Post-translationally, autophosphorylated at various serine and threonine residues. Autophosphorylation does not impair its ability to phosphorylate p53/TP53. Phosphorylation by PLK3 leads to induction of Golgi fragmentation during mitosis. In terms of tissue distribution, widely expressed. Highly expressed in fetal liver, testis and thymus.

It is found in the nucleus. The protein resides in the cytoplasm. It localises to the cajal body. It carries out the reaction L-seryl-[protein] + ATP = O-phospho-L-seryl-[protein] + ADP + H(+). It catalyses the reaction L-threonyl-[protein] + ATP = O-phospho-L-threonyl-[protein] + ADP + H(+). Active in presence of Mn(2+), Mg(2+) and Zn(2+), but is not functional with Ca(2+) or Cu(2+). Has a higher affinity for Mn(2+) than for Mg(2+). RAN inhibits its autophosphorylation and its ability to phosphorylate histone H3. In terms of biological role, serine/threonine kinase involved in the regulation of key cellular processes including the cell cycle, nuclear condensation, transcription regulation, and DNA damage response. Controls chromatin organization and remodeling by mediating phosphorylation of histone H3 on 'Thr-4' and histone H2AX (H2aXT4ph). It also phosphorylates KAT5 in response to DNA damage, promoting KAT5 association with chromatin and histone acetyltransferase activity. Is involved in the regulation of cell cycle progression of neural progenitors, and is required for proper cortical neuronal migration. Is involved in neurite elongation and branching in motor neurons, and has an essential role in Cajal bodies assembly, acting through COIL phosphorylation and the control of coilin degradation. Involved in Golgi disassembly during the cell cycle: following phosphorylation by PLK3 during mitosis, it is required to induce Golgi fragmentation. Phosphorylates BANF1: disrupts its ability to bind DNA, reduces its binding to LEM domain-containing proteins and causes its relocalization from the nucleus to the cytoplasm. Phosphorylates TP53BP1 and p53/TP53 on 'Thr-18', preventing the interaction between p53/TP53 and MDM2. Phosphorylates ATF2 which activates its transcriptional activity. Phosphorylates JUN. The polypeptide is Serine/threonine-protein kinase VRK1 (Homo sapiens (Human)).